A 130-amino-acid polypeptide reads, in one-letter code: Fumarate reductase subunit C (130 aa).

The next 3 helical transmembrane spans lie at 30-50 (EGTS…VFSL), 60-80 (FVSF…LFAA), and 110-130 (IKAL…VALL).

This sequence belongs to the FrdC family. As to quaternary structure, part of an enzyme complex containing four subunits: a flavoprotein (FrdA), an iron-sulfur protein (FrdB), and two hydrophobic anchor proteins (FrdC and FrdD).

The protein localises to the cell inner membrane. Two distinct, membrane-bound, FAD-containing enzymes are responsible for the catalysis of fumarate and succinate interconversion; fumarate reductase is used in anaerobic growth, and succinate dehydrogenase is used in aerobic growth. Anchors the catalytic components of the fumarate reductase complex to the cell inner membrane, binds quinones. The chain is Fumarate reductase subunit C from Yersinia pestis bv. Antiqua (strain Angola).